The chain runs to 206 residues: uncharacterized protein (206 aa).

Disordered regions lie at residues 38 to 88 (RLQQ…NKNA) and 160 to 206 (HQNT…SVQE). Over residues 40-73 (QQQQQQQQQQQQNRTASSLQQPQQQQPISPPLFL) the composition is skewed to low complexity. Serine 68 is modified (phosphoserine). Positions 78-88 (TSENSNLNKNA) are enriched in polar residues. A compositionally biased stretch (low complexity) spans 165–186 (SSSNPGSMSSSPPNSASSIFNS). The span at 192–206 (PYTSQSFNPLESVQE) shows a compositional bias: polar residues.

The protein localises to the cytoplasm. This is an uncharacterized protein from Saccharomyces cerevisiae (strain ATCC 204508 / S288c) (Baker's yeast).